The sequence spans 312 residues: Pyridoxal kinase (312 aa).

Residue methionine 1 is modified to N-acetylmethionine. 2 residues coordinate pyridoxal 5'-phosphate: serine 12 and threonine 47. Residues serine 12 and threonine 47 each coordinate pyridoxamine. Serine 59 is modified (phosphoserine). Aspartate 113 contacts K(+). Tyrosine 127 contacts pyridoxal 5'-phosphate. Threonine 148 is a binding site for K(+). An ADP-binding site is contributed by asparagine 150. Asparagine 150 contributes to the ATP binding site. Serine 164 bears the Phosphoserine mark. Threonine 186 serves as a coordination point for K(+). ADP is bound at residue 186 to 187 (TS). Residue 186 to 187 (TS) coordinates ATP. The residue at position 213 (serine 213) is a Phosphoserine. Residues 223–226 (MHKV) and 233–234 (TG) contribute to the ADP site. Residues 223 to 226 (MHKV) and 233 to 234 (TG) each bind ATP. A pyridoxal 5'-phosphate-binding site is contributed by 232–235 (GTGD). Aspartate 235 lines the pyridoxamine pocket. The Proton acceptor role is filled by aspartate 235. A Phosphoserine modification is found at serine 285.

It belongs to the pyridoxine kinase family. As to quaternary structure, homodimer. Requires Zn(2+) as cofactor. Mg(2+) is required as a cofactor. In terms of tissue distribution, ubiquitous.

Its subcellular location is the cytoplasm. It localises to the cytosol. It catalyses the reaction pyridoxal + ATP = pyridoxal 5'-phosphate + ADP + H(+). It carries out the reaction pyridoxamine + ATP = pyridoxamine 5'-phosphate + ADP + H(+). The enzyme catalyses pyridoxine + ATP = pyridoxine 5'-phosphate + ADP + H(+). It participates in cofactor metabolism; pyridoxal 5'-phosphate salvage; pyridoxal 5'-phosphate from pyridoxal: step 1/1. The protein operates within cofactor metabolism; pyridoxal 5'-phosphate salvage; pyridoxine 5'-phosphate from pyridoxine: step 1/1. It functions in the pathway cofactor metabolism; pyridoxal 5'-phosphate salvage; pyridoxamine 5'-phosphate from pyridoxamine: step 1/1. Activated by K(+). Activity is increased in the presence of Na(+). Catalyzes the phosphorylation of the dietary vitamin B6 vitamers pyridoxal (PL), pyridoxine (PN) and pyridoxamine (PM) to form pyridoxal 5'-phosphate (PLP), pyridoxine 5'-phosphate (PNP) and pyridoxamine 5'-phosphate (PMP), respectively. PLP is the active form of vitamin B6, and acts as a cofactor for over 140 different enzymatic reactions. The polypeptide is Pyridoxal kinase (PDXK) (Ovis aries (Sheep)).